A 1407-amino-acid chain; its full sequence is Probable phosphoribosylformylglycinamidine synthase, chloroplastic/mitochondrial (1407 aa).

Residues 1–53 (MNTSQATRAALFLNGSNRQAMLLQRSSMSQLWGSVRMRTSRLSLNRTKAVSLR) constitute a chloroplast and mitochondrion transit peptide. ATP is bound by residues 407-418 (GAETGAGGRIRD), 487-489 (QGY), and Ala786. 4 residues coordinate Mg(2+): Asp787, Glu826, Asn830, and Asp989. Ser991 provides a ligand contact to ATP. A Glutamine amidotransferase type-1 domain is found at 1141 to 1381 (KVAVIREEGS…LMWQFPWYPT (241 aa)). Catalysis depends on Cys1235, which acts as the Nucleophile. Active-site residues include His1366 and Glu1368.

The protein in the N-terminal section; belongs to the FGAMS family.

Its subcellular location is the plastid. It localises to the chloroplast. The protein localises to the mitochondrion. The enzyme catalyses N(2)-formyl-N(1)-(5-phospho-beta-D-ribosyl)glycinamide + L-glutamine + ATP + H2O = 2-formamido-N(1)-(5-O-phospho-beta-D-ribosyl)acetamidine + L-glutamate + ADP + phosphate + H(+). Its pathway is purine metabolism; IMP biosynthesis via de novo pathway; 5-amino-1-(5-phospho-D-ribosyl)imidazole from N(2)-formyl-N(1)-(5-phospho-D-ribosyl)glycinamide: step 1/2. Essential to the male gametophyte development. Phosphoribosylformylglycinamidine synthase involved in the purines biosynthetic pathway. Catalyzes the ATP-dependent conversion of formylglycinamide ribonucleotide (FGAR) and glutamine to yield formylglycinamidine ribonucleotide (FGAM) and glutamate. This chain is Probable phosphoribosylformylglycinamidine synthase, chloroplastic/mitochondrial, found in Arabidopsis thaliana (Mouse-ear cress).